The sequence spans 403 residues: Cell cycle checkpoint control protein RAD9B (403 aa).

Positions 285–347 (PLSQARRSHP…ASAGQDDIFE (63 aa)) are disordered. Residues Ser-354 and Ser-363 each carry the phosphoserine modification.

Belongs to the rad9 family. Interacts with HUS1, HUS1B, RAD1, RAD9A and RAD17.

The polypeptide is Cell cycle checkpoint control protein RAD9B (Rad9b) (Mus musculus (Mouse)).